The chain runs to 314 residues: MPMYLLDGKRIWVAGHKGMVGSAIIRSLASEDCEVIVADRQKLDLTRQEEVEKFLLKEKPHAVIMAAAKVGGILANDTMPADFIYQNLIMEANVIEGSFRSGVEKLLFLGSSCIYPKYAAQPIREEALLTGPLEPTNEWYAIAKIAGIKLCQAYRKQYGANFISAMPTNLYGPRDKFDLNSSHVVPALIRKAHEAKIKDLGCLSIWGSGTPTRDFLYSEDCSDALVFLLKHYSETEHINIGSGGEISIIELAHIVCRVVGFKGDIVFDTSKPDGTPRKLLSSERLVSMGWRPKTSLELGLAKSYESFVSNVADN.

Residues 15 to 21 (GHKGMVG) and 109 to 112 (LGSS) contribute to the NADP(+) site. Catalysis depends on Tyr140, which acts as the Proton donor/acceptor. Residues Lys144, 167-170 (PTNL), and His183 contribute to the NADP(+) site. Substrate contacts are provided by Lys191, Trp206, Arg213, and Asp273.

This sequence belongs to the NAD(P)-dependent epimerase/dehydratase family. Fucose synthase subfamily.

It catalyses the reaction GDP-beta-L-fucose + NADP(+) = GDP-4-dehydro-alpha-D-rhamnose + NADPH + H(+). The protein operates within nucleotide-sugar biosynthesis; GDP-L-fucose biosynthesis via de novo pathway; GDP-L-fucose from GDP-alpha-D-mannose: step 2/2. Its function is as follows. Catalyzes the two-step NADP-dependent conversion of GDP-4-dehydro-6-deoxy-D-mannose to GDP-fucose, involving an epimerase and a reductase reaction. The chain is GDP-L-fucose synthase from Sinorhizobium fredii (strain NBRC 101917 / NGR234).